The following is a 582-amino-acid chain: A-type ATP synthase subunit A 1 (582 aa).

Residue 231 to 238 (GPFGSGKT) participates in ATP binding.

The protein belongs to the ATPase alpha/beta chains family. As to quaternary structure, has multiple subunits with at least A(3), B(3), C, D, E, F, H, I and proteolipid K(x).

Its subcellular location is the cell membrane. It catalyses the reaction ATP + H2O + 4 H(+)(in) = ADP + phosphate + 5 H(+)(out). Component of the A-type ATP synthase that produces ATP from ADP in the presence of a proton gradient across the membrane. The A chain is the catalytic subunit. The polypeptide is A-type ATP synthase subunit A 1 (Methanospirillum hungatei JF-1 (strain ATCC 27890 / DSM 864 / NBRC 100397 / JF-1)).